The chain runs to 272 residues: Ribosomal RNA small subunit methyltransferase A (272 aa).

Positions 11, 13, 38, 59, 84, and 109 each coordinate S-adenosyl-L-methionine.

It belongs to the class I-like SAM-binding methyltransferase superfamily. rRNA adenine N(6)-methyltransferase family. RsmA subfamily.

It localises to the cytoplasm. It catalyses the reaction adenosine(1518)/adenosine(1519) in 16S rRNA + 4 S-adenosyl-L-methionine = N(6)-dimethyladenosine(1518)/N(6)-dimethyladenosine(1519) in 16S rRNA + 4 S-adenosyl-L-homocysteine + 4 H(+). Functionally, specifically dimethylates two adjacent adenosines (A1518 and A1519) in the loop of a conserved hairpin near the 3'-end of 16S rRNA in the 30S particle. May play a critical role in biogenesis of 30S subunits. The sequence is that of Ribosomal RNA small subunit methyltransferase A from Rippkaea orientalis (strain PCC 8801 / RF-1) (Cyanothece sp. (strain PCC 8801)).